A 717-amino-acid polypeptide reads, in one-letter code: MSGDGATEQAAEYVPEKVKKAEKKLEENPYDLDAWSTLIREAQNQPIDKARKTYERLVAQFPSSGRFWKLYIEAEIKAKNYDKVEKLFQRCLMKVLHIDLWKCYLSYVRETKGKLPSYKEKMAQAYDFALDKIGMEIMSYQIWVDYINFLKGVEAVGSYAENQRITAVRRVYQRGCVNPMINIEQLWRDYNKYEEGINIHLAKKMIEDRSRDYMNARRVAKEYETVMKGLDRNAPSVPPQNTPQEAQQVDMWKKYIQWEKSNPLRTEDQTLITKRVMFAYEQCLLVLGHHPDIWYEAAQYLEQSSKLLAEKGDMNNAKLFSDEAANIYERAISTLLKKNMLLYFAYADYEESRMKYEKVHSIYNRLLAIEDIDPTLVYIQYMKFARRAEGIKSGRMIFKKAREDTRTRHHVYVTAALMEYYCSKDKSVAFKIFELGLKKYGDIPEYVLAYIDYLSHLNEDNNTRVLFERVLTSGSLPPEKSGEIWARFLAFESNIGDLASILKVEKRRFTAFKEEYEGKETALLVDRYKFMDLYPCSASELKALGYKDVSRAKLAAIIPDPVVAPSIVPVLKDEVDRKPEYPKPDTQQMIPFQPRHLAPPGLHPVPGGVFPVPPAAVVLMKLLPPPICFQGPFVQVDELMEIFRRCKIPNTVEEAVRIITGGAPELAVEGNGPVESNAVLTKAVKRPNEDSDEDEEKGAVVPPVHDIYRARQQKRIR.

Position 2 is an N-acetylserine (Ser-2). 9 HAT repeats span residues 45–77 (QPID…AEIK), 79–110 (KNYD…YVRE), 117–152 (SYKE…FLKG), 163–196 (QRIT…YEEG), 221–261 (KEYE…WEKS), 271–303 (LITK…YLEQ), 319–352 (LFSD…YEES), 354–387 (MKYE…FARR), and 458–494 (NEDN…FESN). A disordered region spans residues 684 to 705 (VKRPNEDSDEDEEKGAVVPPVH). Ser-691 carries the phosphoserine modification.

In terms of assembly, homodimer. The CSTF complex is composed of CSTF1 (50 kDa subunit), CSTF2 (64 kDa subunit) and CSTF3 (77 kDa subunit). CSTF3 directly interacts with CSTF1 and CSTF2. Interacts with FIP1L1.

It is found in the nucleus. Its function is as follows. One of the multiple factors required for polyadenylation and 3'-end cleavage of mammalian pre-mRNAs. The protein is Cleavage stimulation factor subunit 3 (CSTF3) of Pongo abelii (Sumatran orangutan).